Consider the following 288-residue polypeptide: ATP synthase gamma chain (288 aa).

Belongs to the ATPase gamma chain family. In terms of assembly, F-type ATPases have 2 components, CF(1) - the catalytic core - and CF(0) - the membrane proton channel. CF(1) has five subunits: alpha(3), beta(3), gamma(1), delta(1), epsilon(1). CF(0) has three main subunits: a, b and c.

It localises to the cell inner membrane. In terms of biological role, produces ATP from ADP in the presence of a proton gradient across the membrane. The gamma chain is believed to be important in regulating ATPase activity and the flow of protons through the CF(0) complex. This Aeromonas hydrophila subsp. hydrophila (strain ATCC 7966 / DSM 30187 / BCRC 13018 / CCUG 14551 / JCM 1027 / KCTC 2358 / NCIMB 9240 / NCTC 8049) protein is ATP synthase gamma chain.